The chain runs to 553 residues: Aminotransferase FUM8 (553 aa).

An N-terminal signal peptide occupies residues 1 to 25; the sequence is MSPAPAILALRRVYNFCLLVDEAHG. The N-linked (GlcNAc...) asparagine glycan is linked to Asn-480.

Belongs to the class-II pyridoxal-phosphate-dependent aminotransferase family. BioF subfamily. Pyridoxal 5'-phosphate is required as a cofactor.

The protein resides in the endoplasmic reticulum. It participates in mycotoxin biosynthesis. Aminotransferase; part of the gene cluster that mediates the biosynthesis of fumonisins B1 (FB1), B2 (FB2), B3 (FB3), and B4 (FB4), which are carcinogenic mycotoxins. Within the pathway, FUM8 catalyzes the release of the C-18 polyketide chain from the highly reducing polyketide synthase FUM1 by a nucleophilic attack of a carbanion, which is derived from R-carbon of alanine by decarboxylation, on the carbonyl carbon of polyketide acyl chain. The biosynthesis starts with the FUM1-catalyzed carbon chain assembly from one molecule of acetyl-CoA, eight molecules of malonyl-CoA, and two molecules of methionine (in S-adenosyl form). The C18 polyketide chain is released from the enzyme by a nucleophilic attack of a carbanion, which is derived from R-carbon of alanine by decarboxylation, on the carbonyl carbon of polyketide acyl chain. This step is catalyzed by the pyridoxal 5'-phosphate-dependent aminoacyl transferase FUM8. The resultant 3-keto intermediate is then stereospecifically reduced to a 3-hydroxyl product by reductase FUM13. Subsequent oxidations at C-10 by the cytochrome P450 monooxygenase FUM2, C-14 and C-15 by FUM6, FUM12 or FUM15, tricarballylic esterification of the hydroxyl groups on C-14 and C-15 by acyltransferase FUM14, and C-5 hydroxylation by 2-keto-glutarate-dependent dioxygenase FUM3 furnish the biosynthesis of fumonisins. The tricarballylic moieties are most likely derived from the citric acid cycle, and their addition to the carbon backbone may involve FUM7, FUM10, FUM11 and FUM14. This is Aminotransferase FUM8 from Gibberella moniliformis (strain M3125 / FGSC 7600) (Maize ear and stalk rot fungus).